The chain runs to 500 residues: Aspartyl/glutamyl-tRNA(Asn/Gln) amidotransferase subunit B (500 aa).

This sequence belongs to the GatB/GatE family. GatB subfamily. In terms of assembly, heterotrimer of A, B and C subunits.

It catalyses the reaction L-glutamyl-tRNA(Gln) + L-glutamine + ATP + H2O = L-glutaminyl-tRNA(Gln) + L-glutamate + ADP + phosphate + H(+). The enzyme catalyses L-aspartyl-tRNA(Asn) + L-glutamine + ATP + H2O = L-asparaginyl-tRNA(Asn) + L-glutamate + ADP + phosphate + 2 H(+). Allows the formation of correctly charged Asn-tRNA(Asn) or Gln-tRNA(Gln) through the transamidation of misacylated Asp-tRNA(Asn) or Glu-tRNA(Gln) in organisms which lack either or both of asparaginyl-tRNA or glutaminyl-tRNA synthetases. The reaction takes place in the presence of glutamine and ATP through an activated phospho-Asp-tRNA(Asn) or phospho-Glu-tRNA(Gln). The sequence is that of Aspartyl/glutamyl-tRNA(Asn/Gln) amidotransferase subunit B from Rhizobium leguminosarum bv. trifolii (strain WSM2304).